The primary structure comprises 454 residues: Bifunctional protein GlmU (454 aa).

Residues 1–226 (MALNVVILAA…AIEVEGANNR (226 aa)) are pyrophosphorylase. UDP-N-acetyl-alpha-D-glucosamine is bound by residues 8–11 (LAAG), Lys22, Gln73, 78–79 (GT), 100–102 (YGD), Gly137, Glu151, Asn166, and Asn224. Asp102 is a binding site for Mg(2+). Asn224 is a binding site for Mg(2+). The segment at 227–247 (VQLAQLERAYQARAAEKLMLE) is linker. Positions 248–454 (GANLRDPARI…GWTRPVKQKK (207 aa)) are N-acetyltransferase. 2 residues coordinate UDP-N-acetyl-alpha-D-glucosamine: Arg330 and Lys348. The Proton acceptor role is filled by His360. UDP-N-acetyl-alpha-D-glucosamine contacts are provided by Tyr363 and Asn374. Acetyl-CoA is bound by residues Ala377, 383 to 384 (NY), Ser402, Ala420, and Arg437.

In the N-terminal section; belongs to the N-acetylglucosamine-1-phosphate uridyltransferase family. It in the C-terminal section; belongs to the transferase hexapeptide repeat family. As to quaternary structure, homotrimer. Mg(2+) is required as a cofactor.

The protein resides in the cytoplasm. The enzyme catalyses alpha-D-glucosamine 1-phosphate + acetyl-CoA = N-acetyl-alpha-D-glucosamine 1-phosphate + CoA + H(+). It carries out the reaction N-acetyl-alpha-D-glucosamine 1-phosphate + UTP + H(+) = UDP-N-acetyl-alpha-D-glucosamine + diphosphate. The protein operates within nucleotide-sugar biosynthesis; UDP-N-acetyl-alpha-D-glucosamine biosynthesis; N-acetyl-alpha-D-glucosamine 1-phosphate from alpha-D-glucosamine 6-phosphate (route II): step 2/2. It participates in nucleotide-sugar biosynthesis; UDP-N-acetyl-alpha-D-glucosamine biosynthesis; UDP-N-acetyl-alpha-D-glucosamine from N-acetyl-alpha-D-glucosamine 1-phosphate: step 1/1. Its pathway is bacterial outer membrane biogenesis; LPS lipid A biosynthesis. Catalyzes the last two sequential reactions in the de novo biosynthetic pathway for UDP-N-acetylglucosamine (UDP-GlcNAc). The C-terminal domain catalyzes the transfer of acetyl group from acetyl coenzyme A to glucosamine-1-phosphate (GlcN-1-P) to produce N-acetylglucosamine-1-phosphate (GlcNAc-1-P), which is converted into UDP-GlcNAc by the transfer of uridine 5-monophosphate (from uridine 5-triphosphate), a reaction catalyzed by the N-terminal domain. This Shewanella loihica (strain ATCC BAA-1088 / PV-4) protein is Bifunctional protein GlmU.